Consider the following 393-residue polypeptide: MNVTTTRKDLMIVNMGPHHPSMHGVLRLILTLDGEDVIDCEPILGYLHRGMEKIAENRTVIQYLPYVTRWDYLATMFTEAITINGPEQLGNIQVPKRASYIRIIMLELSRIASHLLWLGPFMADIGAQTPFFYIFRERELVYDLFEAATGMRMMHNYFRIGGVAADLPYGWIDKCLDFCDYFLTAVSEYQKLITRNPIFLERVEGVGIIGGEEAINWGLSGPMLRASGIEWDLRKVDRYECYGELDWEIRWQKEGDSLARYLVRMSEMTESIKIIQQALEGIPGGPYENLEIRCFDIEKDPEWDGFEYRFISKKPSPTFELPKQELYVRVEAPKGELGIFLIGDQSGFPWRWKIRPPGFINLQILPQLVKRMKLADIMTILGSIDIIMGEVDR.

The protein belongs to the complex I 49 kDa subunit family. In terms of assembly, NDH is composed of at least 16 different subunits, 5 of which are encoded in the nucleus.

It is found in the plastid. The protein resides in the chloroplast thylakoid membrane. The enzyme catalyses a plastoquinone + NADH + (n+1) H(+)(in) = a plastoquinol + NAD(+) + n H(+)(out). The catalysed reaction is a plastoquinone + NADPH + (n+1) H(+)(in) = a plastoquinol + NADP(+) + n H(+)(out). Functionally, NDH shuttles electrons from NAD(P)H:plastoquinone, via FMN and iron-sulfur (Fe-S) centers, to quinones in the photosynthetic chain and possibly in a chloroplast respiratory chain. The immediate electron acceptor for the enzyme in this species is believed to be plastoquinone. Couples the redox reaction to proton translocation, and thus conserves the redox energy in a proton gradient. The sequence is that of NAD(P)H-quinone oxidoreductase subunit H, chloroplastic from Oenothera argillicola (Appalachian evening primrose).